Consider the following 189-residue polypeptide: Phosphoheptose isomerase (189 aa).

Residues 34 to 189 (AVETLKNGNK…CQIIDNELSH (156 aa)) enclose the SIS domain. Position 49-51 (49-51 (NGG)) interacts with substrate. Zn(2+) contacts are provided by His-58 and Glu-62. Substrate contacts are provided by residues Glu-62, 91-92 (ND), 117-119 (STS), Ser-122, and Gln-169. Residues Gln-169 and His-177 each contribute to the Zn(2+) site.

This sequence belongs to the SIS family. GmhA subfamily. Homotetramer. The cofactor is Zn(2+).

Its subcellular location is the cytoplasm. The catalysed reaction is 2 D-sedoheptulose 7-phosphate = D-glycero-alpha-D-manno-heptose 7-phosphate + D-glycero-beta-D-manno-heptose 7-phosphate. It functions in the pathway carbohydrate biosynthesis; D-glycero-D-manno-heptose 7-phosphate biosynthesis; D-glycero-alpha-D-manno-heptose 7-phosphate and D-glycero-beta-D-manno-heptose 7-phosphate from sedoheptulose 7-phosphate: step 1/1. Its function is as follows. Catalyzes the isomerization of sedoheptulose 7-phosphate in D-glycero-D-manno-heptose 7-phosphate. This is Phosphoheptose isomerase from Aliarcobacter butzleri (strain RM4018) (Arcobacter butzleri).